A 474-amino-acid polypeptide reads, in one-letter code: MLRSDVRRVAAGRKASLDGLYCEELEVRGNRNLGNKFSHRGELRSSTESEVFDDGTNTFFWRAHTLTVLFILTCSLGYVTLLEETPQDTAYNAKRGIIASILVFLCFGVTQAKDGPFSRPHPAYWRFWLCVSVVYELFLIFILFQTVHDGRQFMKFIDPKLGVPLPERDYGGNCLIYDPGNKTDPYHNLWDKMDGFVPAHFLGWYIKTLMIRDWWMCMIISVMFEFLEYSLEHQLPNFSECWWDHWIMDVLVCNGFGIYCGMKTLEWLSMKPYKWQGLWNIPTYRGKMKRIAFQFTPYSWVKFEWKPASSLRRWLAVCGIIFVFLLAELNTFYLKFVLWMPPEHYLVLLRLVFFVNVGGVAMREIYDFMDDLKFHKKLGQQAWMVAAITVTEFLIVVKYDPYTITLPLPFYVTQCWILGIVLVLTWTVWRFFIRDITLRYKEIRQQKQHRNEEEKSHRNGDVNSEKDTNKHKKH.

At 1–62 the chain is on the lumenal side; it reads MLRSDVRRVA…DDGTNTFFWR (62 aa). The chain crosses the membrane as a helical span at residues 63-83; that stretch reads AHTLTVLFILTCSLGYVTLLE. At 84-96 the chain is on the cytoplasmic side; sequence ETPQDTAYNAKRG. The chain crosses the membrane as a helical span at residues 97–117; the sequence is IIASILVFLCFGVTQAKDGPF. At 118-126 the chain is on the lumenal side; sequence SRPHPAYWR. The helical transmembrane segment at 127–147 threads the bilayer; sequence FWLCVSVVYELFLIFILFQTV. Over 148-313 the chain is Cytoplasmic; the sequence is HDGRQFMKFI…EWKPASSLRR (166 aa). A helical membrane pass occupies residues 314-334; that stretch reads WLAVCGIIFVFLLAELNTFYL. Position 335 (Lys335) is a topological domain, lumenal. Residues 336 to 356 traverse the membrane as a helical segment; that stretch reads FVLWMPPEHYLVLLRLVFFVN. Topologically, residues 357-376 are cytoplasmic; the sequence is VGGVAMREIYDFMDDLKFHK. A helical membrane pass occupies residues 377 to 397; that stretch reads KLGQQAWMVAAITVTEFLIVV. The Lumenal portion of the chain corresponds to 398 to 403; it reads KYDPYT. A helical membrane pass occupies residues 404 to 424; that stretch reads ITLPLPFYVTQCWILGIVLVL. The Cytoplasmic portion of the chain corresponds to 425-474; that stretch reads TWTVWRFFIRDITLRYKEIRQQKQHRNEEEKSHRNGDVNSEKDTNKHKKH. Over residues 448–468 the composition is skewed to basic and acidic residues; the sequence is QHRNEEEKSHRNGDVNSEKDT. Positions 448-474 are disordered; the sequence is QHRNEEEKSHRNGDVNSEKDTNKHKKH.

It belongs to the phosphatidyl serine synthase family.

It is found in the endoplasmic reticulum membrane. The catalysed reaction is a 1,2-diacyl-sn-glycero-3-phosphoethanolamine + L-serine = a 1,2-diacyl-sn-glycero-3-phospho-L-serine + ethanolamine. The enzyme catalyses 1-hexadecanoyl-2-(9Z-octadecenoyl)-sn-glycero-3-phosphoethanolamine + L-serine = 1-hexadecanoyl-2-(9Z-octadecenoyl)-sn-glycero-3-phospho-L-serine + ethanolamine. It carries out the reaction 1-hexadecanoyl-2-(4Z,7Z,10Z,13Z,16Z,19Z-docosahexaenoyl)-sn-glycero-3-phosphoethanolamine + L-serine = 1-hexadecanoyl-2-(4Z,7Z,10Z,13Z,16Z,19Z-docosahexaenoyl)-sn-glycero-3-phosphoserine + ethanolamine. It catalyses the reaction 1-octadecanoyl-2-(5Z,8Z,11Z,14Z)-eicosatetraenoyl-sn-glycero-3-phosphoethanolamine + L-serine = 1-octadecanoyl-2-(5Z,8Z,11Z,14Z)-eicosatetraenoyl-sn-glycero-3-phosphoserine + ethanolamine. The catalysed reaction is 1-octadecanoyl-2-(4Z,7Z,10Z,13Z,16Z,19Z-docosahexaenoyl)-sn-glycero-3-phosphoethanolamine + L-serine = 1-octadecanoyl-2-(4Z,7Z,10Z,13Z,16Z,19Z-docosahexaenoyl)-sn-glycero-3-phosphoserine + ethanolamine. The enzyme catalyses 1-(1Z-octadecenyl)-2-(4Z,7Z,10Z,13Z,16Z,19Z-docosahexaenoyl)-sn-glycero-3-phosphoethanolamine + L-serine = 1-(1Z-octadecenyl)-2-(4Z,7Z,10Z,13Z,16Z,19Z-docosahexaenoyl)-sn-glycero-3-phospho-L-serine + ethanolamine. It carries out the reaction 1-octadecanoyl-2-(9Z-octadecenoyl)-sn-glycero-3-phosphoethanolamine + L-serine = 1-octadecanoyl-2-(9Z-octadecenoyl)-sn-glycero-3-phospho-L-serine + ethanolamine. It catalyses the reaction 1-(1Z-octadecenyl)-2-(9Z-octadecenoyl)-sn-glycero-3-phosphoethanolamine + L-serine = 1-(1Z-octadecenyl)-2-(9Z-octadecenoyl)-sn-glycero-3-phospho-L-serine + ethanolamine. The catalysed reaction is 1-(1Z-octadecenyl)-2-(5Z,8Z,11Z,14Z- eicosatetraenoyl)-sn-glycero-3-phosphoethanolamine + L-serine = 1-(1Z-octadecenyl)-2-(5Z,8Z,11Z,14Z-eicosatetraenoyl)-sn-glycero-3-phospho-L-serine + ethanolamine. The protein operates within phospholipid metabolism; phosphatidylserine biosynthesis. Its function is as follows. Catalyzes a base-exchange reaction in which the polar head group of phosphatidylethanolamine (PE) or phosphatidylcholine (PC) is replaced by L-serine. Catalyzes the conversion of phosphatatidylethanolamine and does not act on phosphatidylcholine. Can utilize both phosphatidylethanolamine (PE) plasmalogen and diacyl PE as substrate and the latter is six times better utilized, indicating the importance of an ester linkage at the sn-1 position. Although it shows no sn-1 fatty acyl preference, exhibits significant preference towards docosahexaenoic acid (22:6n-3) compared with 18:1 or 20:4 at the sn-2 position. The polypeptide is Phosphatidylserine synthase 2 (ptdss2) (Xenopus tropicalis (Western clawed frog)).